We begin with the raw amino-acid sequence, 153 residues long: Methylglyoxal synthase (153 aa).

The 151-residue stretch at 3–153 folds into the MGS-like domain; the sequence is DQVNRPKGVT…SYLSRDVPGN (151 aa). Residues H19, K23, 45–48, and 65–66 contribute to the substrate site; these read TGTT and SG. The active-site Proton donor/acceptor is D71. H98 provides a ligand contact to substrate.

The protein belongs to the methylglyoxal synthase family.

The catalysed reaction is dihydroxyacetone phosphate = methylglyoxal + phosphate. Catalyzes the formation of methylglyoxal from dihydroxyacetone phosphate. The polypeptide is Methylglyoxal synthase (Hahella chejuensis (strain KCTC 2396)).